Consider the following 977-residue polypeptide: Mast/stem cell growth factor receptor Kit (977 aa).

An N-terminal signal peptide occupies residues Met-1 to Ser-25. Over Gln-26–Pro-525 the chain is Extracellular. 5 consecutive Ig-like C2-type domains span residues Pro-27–Arg-112, Asp-121–Arg-205, Pro-212–Val-309, Pro-318–Asn-411, and Pro-414–Ala-508. Cysteines 58 and 97 form a disulfide. N-linked (GlcNAc...) asparagine glycans are attached at residues Asn-94, Asn-130, and Asn-145. 3 cysteine pairs are disulfide-bonded: Cys-136-Cys-186, Cys-151-Cys-183, and Cys-233-Cys-291. 9 N-linked (GlcNAc...) asparagine glycosylation sites follow: Asn-284, Asn-294, Asn-301, Asn-321, Asn-353, Asn-368, Asn-401, Asn-464, and Asn-487. A disulfide bridge links Cys-429 with Cys-492. Residues Leu-526–Tyr-546 traverse the membrane as a helical segment. Residues Lys-547–Val-977 are Cytoplasmic-facing. Tyr-548 and Tyr-554 each carry phosphotyrosine. Residue Tyr-569 coordinates Mg(2+). A phosphotyrosine; by autocatalysis mark is found at Tyr-569 and Tyr-571. The interval Tyr-569–Tyr-571 is important for interaction with phosphotyrosine-binding proteins. The Protein kinase domain occupies Leu-590–Ser-938. ATP contacts are provided by residues Gly-597–Val-604, Lys-624, and Glu-672–Asp-678. A phosphotyrosine; by autocatalysis mark is found at Tyr-704 and Tyr-722. Tyr-731 is modified (phosphotyrosine). 2 positions are modified to phosphoserine; by PKC/PRKCA: Ser-742 and Ser-747. Catalysis depends on Asp-793, which acts as the Proton acceptor. ATP is bound at residue Arg-797. Asn-798 and Asp-811 together coordinate Mg(2+). At Ser-822 the chain carries Phosphoserine. Tyr-824 carries the phosphotyrosine; by autocatalysis modification. Ser-892 carries the phosphoserine modification. Tyr-901 is modified (phosphotyrosine). Phosphotyrosine; by autocatalysis is present on Tyr-937. Ser-960 is subject to Phosphoserine.

The protein belongs to the protein kinase superfamily. Tyr protein kinase family. CSF-1/PDGF receptor subfamily. In terms of assembly, monomer in the absence of bound KITLG/SCF. Homodimer in the presence of bound KITLG/SCF, forming a heterotetramer with two KITLG/SCF molecules. Interacts (via phosphorylated tyrosine residues) with the adapter proteins GRB2 and GRB7 (via SH2 domain), and SH2B2/APS. Interacts (via C-terminus) with MPDZ (via the tenth PDZ domain). Interacts (via phosphorylated tyrosine residues) with PIK3R1 and PIK3CD. Interacts (via phosphorylated tyrosine) with CRK (isoform Crk-II), FYN, SHC1 and MATK/CHK (via SH2 domain). Interacts with LYN and FES/FPS. Interacts (via phosphorylated tyrosine residues) with the protein phosphatases PTPN6/SHP-1 (via SH2 domain), PTPN11/SHP-2 (via SH2 domain) and PTPRU. Interacts with PLCG1. Interacts with DOK1 and TEC. Interacts with IL1RAP (independent of stimulation with KITLG/SCF). A mast cell-specific KITLG/SCF-induced interleukin-33 signaling complex contains IL1RL1, IL1RAP, KIT and MYD88. Ubiquitinated by SOCS6. KIT is rapidly ubiquitinated after autophosphorylation induced by KITLG/SCF binding, leading to internalization and degradation. Post-translationally, autophosphorylated on tyrosine residues. KITLG/SCF binding promotes autophosphorylation. Phosphorylated tyrosine residues are important for interaction with specific binding partners.

The protein localises to the cell membrane. It carries out the reaction L-tyrosyl-[protein] + ATP = O-phospho-L-tyrosyl-[protein] + ADP + H(+). Its activity is regulated as follows. Present in an inactive conformation in the absence of bound ligand. KITLG/SCF binding leads to dimerization and activation by autophosphorylation on tyrosine residues. Activity is down-regulated by PRKCA-mediated phosphorylation on serine residues. Functionally, tyrosine-protein kinase that acts as a cell-surface receptor for the cytokine KITLG/SCF and plays an essential role in the regulation of cell survival and proliferation, hematopoiesis, stem cell maintenance, gametogenesis, mast cell development, migration and function, and in melanogenesis. In response to KITLG/SCF binding, KIT can activate several signaling pathways. Phosphorylates PIK3R1, PLCG1, SH2B2/APS and CBL. Activates the AKT1 signaling pathway by phosphorylation of PIK3R1, the regulatory subunit of phosphatidylinositol 3-kinase. Activated KIT also transmits signals via GRB2 and activation of RAS, RAF1 and the MAP kinases MAPK1/ERK2 and/or MAPK3/ERK1. Promotes activation of STAT family members STAT1, STAT3, STAT5A and STAT5B. Activation of PLCG1 leads to the production of the cellular signaling molecules diacylglycerol and inositol 1,4,5-trisphosphate. KIT signaling is modulated by protein phosphatases, and by rapid internalization and degradation of the receptor. Activated KIT promotes phosphorylation of the protein phosphatases PTPN6/SHP-1 and PTPRU, and of the transcription factors STAT1, STAT3, STAT5A and STAT5B. Promotes phosphorylation of PIK3R1, CBL, CRK (isoform Crk-II), LYN, MAPK1/ERK2 and/or MAPK3/ERK1, PLCG1, SRC and SHC1. This Bos taurus (Bovine) protein is Mast/stem cell growth factor receptor Kit (KIT).